The chain runs to 342 residues: Holliday junction branch migration complex subunit RuvB (342 aa).

The large ATPase domain (RuvB-L) stretch occupies residues 1–181; it reads MENRMVTPFD…FGMLCAMEFY (181 aa). ATP is bound by residues leucine 20, arginine 21, glycine 62, lysine 65, threonine 66, threonine 67, 128–130, arginine 171, tyrosine 181, and arginine 218; that span reads EDY. Threonine 66 provides a ligand contact to Mg(2+). Residues 182-252 are small ATPAse domain (RuvB-S); the sequence is TDEELMEIVV…GAKAALDLLE (71 aa). The tract at residues 255-342 is head domain (RuvB-H); that stretch reads KEGLDKIDNK…KDNQVSIFNK (88 aa). Positions 310 and 315 each coordinate DNA.

Belongs to the RuvB family. Homohexamer. Forms an RuvA(8)-RuvB(12)-Holliday junction (HJ) complex. HJ DNA is sandwiched between 2 RuvA tetramers; dsDNA enters through RuvA and exits via RuvB. An RuvB hexamer assembles on each DNA strand where it exits the tetramer. Each RuvB hexamer is contacted by two RuvA subunits (via domain III) on 2 adjacent RuvB subunits; this complex drives branch migration. In the full resolvosome a probable DNA-RuvA(4)-RuvB(12)-RuvC(2) complex forms which resolves the HJ.

The protein resides in the cytoplasm. The enzyme catalyses ATP + H2O = ADP + phosphate + H(+). The RuvA-RuvB-RuvC complex processes Holliday junction (HJ) DNA during genetic recombination and DNA repair, while the RuvA-RuvB complex plays an important role in the rescue of blocked DNA replication forks via replication fork reversal (RFR). RuvA specifically binds to HJ cruciform DNA, conferring on it an open structure. The RuvB hexamer acts as an ATP-dependent pump, pulling dsDNA into and through the RuvAB complex. RuvB forms 2 homohexamers on either side of HJ DNA bound by 1 or 2 RuvA tetramers; 4 subunits per hexamer contact DNA at a time. Coordinated motions by a converter formed by DNA-disengaged RuvB subunits stimulates ATP hydrolysis and nucleotide exchange. Immobilization of the converter enables RuvB to convert the ATP-contained energy into a lever motion, pulling 2 nucleotides of DNA out of the RuvA tetramer per ATP hydrolyzed, thus driving DNA branch migration. The RuvB motors rotate together with the DNA substrate, which together with the progressing nucleotide cycle form the mechanistic basis for DNA recombination by continuous HJ branch migration. Branch migration allows RuvC to scan DNA until it finds its consensus sequence, where it cleaves and resolves cruciform DNA. The protein is Holliday junction branch migration complex subunit RuvB of Clostridium botulinum (strain 657 / Type Ba4).